Reading from the N-terminus, the 93-residue chain is Large ribosomal subunit protein uL23 (93 aa).

This sequence belongs to the universal ribosomal protein uL23 family. As to quaternary structure, part of the 50S ribosomal subunit. Contacts protein L29, and trigger factor when it is bound to the ribosome.

Its function is as follows. One of the early assembly proteins it binds 23S rRNA. One of the proteins that surrounds the polypeptide exit tunnel on the outside of the ribosome. Forms the main docking site for trigger factor binding to the ribosome. This chain is Large ribosomal subunit protein uL23, found in Wolinella succinogenes (strain ATCC 29543 / DSM 1740 / CCUG 13145 / JCM 31913 / LMG 7466 / NCTC 11488 / FDC 602W) (Vibrio succinogenes).